We begin with the raw amino-acid sequence, 209 residues long: Small ribosomal subunit protein uS3 (209 aa).

The 70-residue stretch at 38 to 107 (IRKFIKNKYY…RVVINIEEIK (70 aa)) folds into the KH type-2 domain.

This sequence belongs to the universal ribosomal protein uS3 family. As to quaternary structure, part of the 30S ribosomal subunit. Forms a tight complex with proteins S10 and S14.

Binds the lower part of the 30S subunit head. Binds mRNA in the 70S ribosome, positioning it for translation. This chain is Small ribosomal subunit protein uS3, found in Thermotoga sp. (strain RQ2).